A 340-amino-acid polypeptide reads, in one-letter code: N-acetyl-gamma-glutamyl-phosphate reductase (340 aa).

Residue C149 is part of the active site.

This sequence belongs to the NAGSA dehydrogenase family. Type 1 subfamily.

The protein resides in the cytoplasm. It carries out the reaction N-acetyl-L-glutamate 5-semialdehyde + phosphate + NADP(+) = N-acetyl-L-glutamyl 5-phosphate + NADPH + H(+). It functions in the pathway amino-acid biosynthesis; L-arginine biosynthesis; N(2)-acetyl-L-ornithine from L-glutamate: step 3/4. Catalyzes the NADPH-dependent reduction of N-acetyl-5-glutamyl phosphate to yield N-acetyl-L-glutamate 5-semialdehyde. The protein is N-acetyl-gamma-glutamyl-phosphate reductase of Vesicomyosocius okutanii subsp. Calyptogena okutanii (strain HA).